The sequence spans 456 residues: Riboflavin transporter RibZ (456 aa).

The next 14 membrane-spanning stretches (helical) occupy residues 5–25 (WIVLIIICIGVFMSTLDGSIL), 45–65 (WVVTAYMLVVTATMLFFGKLG), 78–98 (FFIFTIGSFLCSMSNNLSTLI), 105–125 (AVGASILMATGLGIVSNAFPA), 134–154 (ITGAVVGIGNMSGPVIGGIIL), 158–178 (GWPSIFIINIPIGIIAVFLGI), 192–212 (SFDIPGLLLFASCTTLILLAM), 220–240 (LYLGITALIIFLLLALREVKF), 260–280 (IIGVACYFPQMAVSFLLPFYL), 289–309 (MMAGYVMTVHPLIMVLIAPIA), 321–341 (ILTASFSFMTISLVGMALLKA), 343–363 (SPLYLLIVCLVIFGLGLGAFS), 385–405 (FLATIRNLSFALGTAFFSSFF), and 428–448 (QSYWIAASVCFIGLILTVFFM).

Belongs to the major facilitator superfamily.

The protein localises to the cell membrane. In terms of biological role, transports riboflavin into the cell. In Clostridioides difficile (strain 630) (Peptoclostridium difficile), this protein is Riboflavin transporter RibZ.